We begin with the raw amino-acid sequence, 432 residues long: Glutamate-1-semialdehyde 2,1-aminomutase (432 aa).

Position 270 is an N6-(pyridoxal phosphate)lysine (lysine 270).

It belongs to the class-III pyridoxal-phosphate-dependent aminotransferase family. HemL subfamily. Homodimer. Pyridoxal 5'-phosphate serves as cofactor.

Its subcellular location is the cytoplasm. The enzyme catalyses (S)-4-amino-5-oxopentanoate = 5-aminolevulinate. Its pathway is porphyrin-containing compound metabolism; protoporphyrin-IX biosynthesis; 5-aminolevulinate from L-glutamyl-tRNA(Glu): step 2/2. The sequence is that of Glutamate-1-semialdehyde 2,1-aminomutase from Acinetobacter baumannii (strain ATCC 17978 / DSM 105126 / CIP 53.77 / LMG 1025 / NCDC KC755 / 5377).